The primary structure comprises 50 residues: Large ribosomal subunit protein bL33B (50 aa).

Belongs to the bacterial ribosomal protein bL33 family.

This chain is Large ribosomal subunit protein bL33B, found in Streptococcus pneumoniae (strain ATCC BAA-255 / R6).